Reading from the N-terminus, the 514-residue chain is Cytochrome P450 monooxygenase verB (514 aa).

A helical membrane pass occupies residues 5-25 (WLSASVLITAVILLVDYLNYY). A heme-binding site is contributed by C457.

The protein belongs to the cytochrome P450 family. Heme serves as cofactor.

It localises to the membrane. It functions in the pathway mycotoxin biosynthesis. Cytochrome P450 monooxygenase; part of the gene cluster that mediates the biosynthesis of 11'-deoxyverticillin A, one of the dimeric epipolythiodioxopiperazines (ETPs) from the verticillin family that act as mycotoxins. 11'-deoxyverticillin A is required for normal conidiation. The nonribosomal peptide synthetase verP is speculated to be responsible for condensation of amino acids to form the carbon skeleton of verticillin, whereas the cluster-specific tailoring enzymes are involved in further modifications leading to the production of 11'-deoxyverticillin A. The sequence is that of Cytochrome P450 monooxygenase verB from Clonostachys rogersoniana.